The following is a 525-amino-acid chain: EGF domain-specific O-linked N-acetylglucosamine transferase (525 aa).

Residues 1–24 (MVPLRLVLLLHIIHFSCENEVGSA) form the signal peptide. Residues 293 to 295 (DYE) carry the Required for optimal activity motif. An N-linked (GlcNAc...) asparagine glycan is attached at asparagine 352. The short motif at 522-525 (RDEL) is the Prevents secretion from ER element.

The protein belongs to the glycosyltransferase 61 family.

It is found in the endoplasmic reticulum lumen. The catalysed reaction is L-seryl-[protein] + UDP-N-acetyl-alpha-D-glucosamine = 3-O-(N-acetyl-beta-D-glucosaminyl)-L-seryl-[protein] + UDP + H(+). The enzyme catalyses L-threonyl-[protein] + UDP-N-acetyl-alpha-D-glucosamine = 3-O-(N-acetyl-beta-D-glucosaminyl)-L-threonyl-[protein] + UDP + H(+). Functionally, catalyzes the transfer of a single N-acetylglucosamine from UDP-GlcNAc to a serine or threonine residue in extracellular proteins resulting in their modification with a beta-linked N-acetylglucosamine (O-GlcNAc). Specifically glycosylates the Thr residue located between the fifth and sixth conserved cysteines of folded EGF-like domains. The polypeptide is EGF domain-specific O-linked N-acetylglucosamine transferase (eogt) (Xenopus laevis (African clawed frog)).